We begin with the raw amino-acid sequence, 671 residues long: DNA ligase (671 aa).

Residues aspartate 32 to aspartate 36, serine 81 to leucine 82, and glutamate 113 each bind NAD(+). Residue lysine 115 is the N6-AMP-lysine intermediate of the active site. NAD(+)-binding residues include arginine 136, glutamate 173, lysine 290, and lysine 314. Residues cysteine 408, cysteine 411, cysteine 426, and cysteine 432 each coordinate Zn(2+). The BRCT domain occupies glutamate 593–alanine 671.

The protein belongs to the NAD-dependent DNA ligase family. LigA subfamily. The cofactor is Mg(2+). Mn(2+) is required as a cofactor.

It catalyses the reaction NAD(+) + (deoxyribonucleotide)n-3'-hydroxyl + 5'-phospho-(deoxyribonucleotide)m = (deoxyribonucleotide)n+m + AMP + beta-nicotinamide D-nucleotide.. Its function is as follows. DNA ligase that catalyzes the formation of phosphodiester linkages between 5'-phosphoryl and 3'-hydroxyl groups in double-stranded DNA using NAD as a coenzyme and as the energy source for the reaction. It is essential for DNA replication and repair of damaged DNA. The protein is DNA ligase of Salmonella typhi.